The chain runs to 965 residues: Glycine dehydrogenase (decarboxylating) (965 aa).

N6-(pyridoxal phosphate)lysine is present on K711.

It belongs to the GcvP family. The glycine cleavage system is composed of four proteins: P, T, L and H. Pyridoxal 5'-phosphate is required as a cofactor.

It catalyses the reaction N(6)-[(R)-lipoyl]-L-lysyl-[glycine-cleavage complex H protein] + glycine + H(+) = N(6)-[(R)-S(8)-aminomethyldihydrolipoyl]-L-lysyl-[glycine-cleavage complex H protein] + CO2. Functionally, the glycine cleavage system catalyzes the degradation of glycine. The P protein binds the alpha-amino group of glycine through its pyridoxal phosphate cofactor; CO(2) is released and the remaining methylamine moiety is then transferred to the lipoamide cofactor of the H protein. The polypeptide is Glycine dehydrogenase (decarboxylating) (Psychrobacter cryohalolentis (strain ATCC BAA-1226 / DSM 17306 / VKM B-2378 / K5)).